A 545-amino-acid polypeptide reads, in one-letter code: Chaperonin GroEL 4 (545 aa).

ATP contacts are provided by residues 30 to 33, lysine 51, 87 to 91, glycine 415, and aspartate 495; these read TLGP and DGTTT.

It belongs to the chaperonin (HSP60) family. Forms a cylinder of 14 subunits composed of two heptameric rings stacked back-to-back. Interacts with the co-chaperonin GroES.

Its subcellular location is the cytoplasm. The catalysed reaction is ATP + H2O + a folded polypeptide = ADP + phosphate + an unfolded polypeptide.. Functionally, together with its co-chaperonin GroES, plays an essential role in assisting protein folding. The GroEL-GroES system forms a nano-cage that allows encapsulation of the non-native substrate proteins and provides a physical environment optimized to promote and accelerate protein folding. In Rhizobium meliloti (strain 1021) (Ensifer meliloti), this protein is Chaperonin GroEL 4.